The following is a 158-amino-acid chain: MAKFTKSLVLCLLLAAFVGAFGAELSEADKANVVNEIAANIQREILKGVKSSETTLTMFLKEMQLKGLPTCGETCFGGTCNTPGCSCSSWPICTRNGLPKRAGVKSSETTLTMFLKEMQLKGLPTCGETCFGGTCNTPGCTCDPWPICTRDGLPSAAA.

An N-terminal signal peptide occupies residues M1–G22. The propeptide occupies A23–K66. A cross-link (cyclopeptide (Gly-Asn)) is located at residues G67–N96. 3 disulfide bridges follow: C71-C85, C75-C87, and C80-C93. Residues G97–K121 constitute a propeptide that is removed on maturation. A cross-link (cyclopeptide (Gly-Asp)) is located at residues G122–D151. Disulfide bonds link C126–C140, C130–C142, and C135–C148. Positions G152–A158 are excised as a propeptide.

It belongs to the cyclotide family. Moebius subfamily. Post-translationally, kalata-B3 and kalata-B6 are cyclic peptides.

In terms of biological role, probably participates in a plant defense mechanism. Has hemolytic activity. The protein is Kalata-B3/B6 (OAK2) of Oldenlandia affinis.